The following is a 350-amino-acid chain: Small-conductance mechanosensitive channel MscMJ (350 aa).

5 helical membrane passes run 10 to 30 (ISNI…GKIV), 59 to 79 (LPII…FLIL), 91 to 111 (VKVV…DGIF), 130 to 150 (IIKP…ILTA), and 154 to 174 (VGYD…ALAL).

The protein belongs to the MscS (TC 1.A.23) family.

The protein localises to the cell membrane. Small-conductance mechanosensitive channel that opens in response to stretch forces in the membrane lipid bilayer. Exhibits a sixfold preference for cations over anions. Non-rectifying. This Methanocaldococcus jannaschii (strain ATCC 43067 / DSM 2661 / JAL-1 / JCM 10045 / NBRC 100440) (Methanococcus jannaschii) protein is Small-conductance mechanosensitive channel MscMJ.